The sequence spans 369 residues: Anhydro-N-acetylmuramic acid kinase (369 aa).

ATP is bound at residue 11-18; that stretch reads GTSMDAVD.

It belongs to the anhydro-N-acetylmuramic acid kinase family.

The catalysed reaction is 1,6-anhydro-N-acetyl-beta-muramate + ATP + H2O = N-acetyl-D-muramate 6-phosphate + ADP + H(+). It functions in the pathway amino-sugar metabolism; 1,6-anhydro-N-acetylmuramate degradation. Its pathway is cell wall biogenesis; peptidoglycan recycling. Catalyzes the specific phosphorylation of 1,6-anhydro-N-acetylmuramic acid (anhMurNAc) with the simultaneous cleavage of the 1,6-anhydro ring, generating MurNAc-6-P. Is required for the utilization of anhMurNAc either imported from the medium or derived from its own cell wall murein, and thus plays a role in cell wall recycling. This chain is Anhydro-N-acetylmuramic acid kinase, found in Idiomarina loihiensis (strain ATCC BAA-735 / DSM 15497 / L2-TR).